Consider the following 145-residue polypeptide: uncharacterized protein (145 aa).

4 helical membrane-spanning segments follow: residues 1–21, 28–48, 54–74, and 96–116; these read MELF…YFLI, TVLI…MGAL, SMTS…AYVM, and FFLI…IPSA.

This sequence belongs to the DcuC/DcuD transporter (TC 2.A.61) family.

Its subcellular location is the cell membrane. This is an uncharacterized protein from Haemophilus influenzae (strain ATCC 51907 / DSM 11121 / KW20 / Rd).